The sequence spans 369 residues: Adenosine 3'-phospho 5'-phosphosulfate transporter 2 (369 aa).

A glycan (N-linked (GlcNAc...) asparagine) is linked at Asn-39. Transmembrane regions (helical) follow at residues 46 to 66, 79 to 99, 115 to 135, 138 to 158, 168 to 188, and 191 to 211; these read LTQFLICVAGVFVFYLIYGYL, YGWYLTLVQFAFYSVFGLIEL, MLIAFLTVGTMGLSNTSLGYL, PTQVIFKCCKLIPVMLGGVFI, VSAAVCMSLGLIWFTLADSTI, and NFNLTGVMLISLALCADAVIG. Residue Asn-222 is glycosylated (N-linked (GlcNAc...) asparagine). The next 4 membrane-spanning stretches (helical) occupy residues 235–255, 266–285, 292–314, and 317–337; these read IGFVYILLGLSCTSGLGPAVA, GYAFLFSLTGYFGISFVLAL, LLAVTVTTGRKAMTVVLSFLFFA, and FTFQYIWSGLLVVLGIFLNVY.

Belongs to the nucleotide-sugar transporter family. SLC35B subfamily.

Its subcellular location is the golgi apparatus membrane. The catalysed reaction is 3'-phosphoadenylyl sulfate(in) + adenosine 3',5'-bisphosphate(out) = 3'-phosphoadenylyl sulfate(out) + adenosine 3',5'-bisphosphate(in). In terms of biological role, probably functions as a 3'-phosphoadenylyl sulfate:adenosine 3',5'-bisphosphate antiporter at the Golgi membranes. Mediates the transport from the cytosol into the lumen of the Golgi of 3'-phosphoadenylyl sulfate/adenosine 3'-phospho 5'-phosphosulfate (PAPS), a universal sulfuryl donor for sulfation events that take place in that compartment. This chain is Adenosine 3'-phospho 5'-phosphosulfate transporter 2, found in Mus musculus (Mouse).